We begin with the raw amino-acid sequence, 141 residues long: Large ribosomal subunit protein uL11 (141 aa).

Belongs to the universal ribosomal protein uL11 family. Part of the ribosomal stalk of the 50S ribosomal subunit. Interacts with L10 and the large rRNA to form the base of the stalk. L10 forms an elongated spine to which L12 dimers bind in a sequential fashion forming a multimeric L10(L12)X complex. One or more lysine residues are methylated.

In terms of biological role, forms part of the ribosomal stalk which helps the ribosome interact with GTP-bound translation factors. This Syntrophomonas wolfei subsp. wolfei (strain DSM 2245B / Goettingen) protein is Large ribosomal subunit protein uL11.